The primary structure comprises 431 residues: Reticulon-like protein B17 (431 aa).

Disordered regions lie at residues 1-110 (MEST…SEAV) and 126-152 (PPRK…SSSD). Over residues 12–26 (TKSASRLQDSSNPPN) the composition is skewed to polar residues. The span at 126-138 (PPRKRKTNGRPKK) shows a compositional bias: basic residues. Positions 142–152 (SSAPPLCSSSD) are enriched in polar residues. In terms of domain architecture, Reticulon spans 168–355 (ISDLVMWRDV…VTAFWNLTSI (188 aa)). Helical transmembrane passes span 177-197 (VAKS…SCFA), 202-222 (FSVF…SFLS), 286-306 (YGHL…SFTI), and 349-369 (FWNL…LVIF). A compositionally biased stretch (acidic residues) spans 382-415 (EVEPVENEQEEETLPQEEETVPQEEETVPQEEEQ). The disordered stretch occupies residues 382–422 (EVEPVENEQEEETLPQEEETVPQEEETVPQEEEQTQPSEER).

It localises to the endoplasmic reticulum membrane. The chain is Reticulon-like protein B17 (RTNLB17) from Arabidopsis thaliana (Mouse-ear cress).